Consider the following 148-residue polypeptide: MTDQGMTDQSMKSRLVELLIVHVLRKGKKSLARRIVYEALKRIEERNQQSGVLMLEQAVSQVMPLVCVKARRVGGATYQVPQEVKPYTGINNALRWIVKYAKDRSGKSMAIKLAAEIWDAAHGTGGAIRKKEETHRMAEANKAFAHYR.

It belongs to the universal ribosomal protein uS7 family. As to quaternary structure, part of the 30S ribosomal subunit.

The protein resides in the plastid. Its subcellular location is the chloroplast. Its function is as follows. One of the primary rRNA binding proteins, it binds directly to 16S rRNA where it nucleates assembly of the head domain of the 30S subunit. This Cyanidioschyzon merolae (strain NIES-3377 / 10D) (Unicellular red alga) protein is Small ribosomal subunit protein uS7c (rps7).